Consider the following 914-residue polypeptide: Beta-mannosidase A (914 aa).

The N-terminal stretch at 1–20 (MRFTATAAALVASSIPATLG) is a signal peptide. Asparagine 39, asparagine 79, asparagine 230, asparagine 265, asparagine 299, asparagine 309, and asparagine 330 each carry an N-linked (GlcNAc...) asparagine glycan. Catalysis depends on glutamate 462, which acts as the Proton donor. 8 N-linked (GlcNAc...) asparagine glycosylation sites follow: asparagine 591, asparagine 614, asparagine 641, asparagine 721, asparagine 744, asparagine 773, asparagine 784, and asparagine 909.

Belongs to the glycosyl hydrolase 2 family. Beta-mannosidase A subfamily. As to quaternary structure, homodimer.

The protein localises to the secreted. It catalyses the reaction Hydrolysis of terminal, non-reducing beta-D-mannose residues in beta-D-mannosides.. Its pathway is glycan metabolism; N-glycan degradation. Its function is as follows. Exoglycosidase that cleaves the single beta-linked mannose residue from the non-reducing end of beta-mannosidic oligosaccharides of various complexity and length. Involved in the degradation of polymeric mannan and galactomannan. This is Beta-mannosidase A (mndA) from Aspergillus flavus (strain ATCC 200026 / FGSC A1120 / IAM 13836 / NRRL 3357 / JCM 12722 / SRRC 167).